The sequence spans 431 residues: U-box domain-containing protein 20 (431 aa).

Residues 32 to 106 (TIPSQFQCPI…QGWCGSSLGG (75 aa)) enclose the U-box domain.

The enzyme catalyses S-ubiquitinyl-[E2 ubiquitin-conjugating enzyme]-L-cysteine + [acceptor protein]-L-lysine = [E2 ubiquitin-conjugating enzyme]-L-cysteine + N(6)-ubiquitinyl-[acceptor protein]-L-lysine.. Its pathway is protein modification; protein ubiquitination. Its function is as follows. Functions as an E3 ubiquitin ligase. The polypeptide is U-box domain-containing protein 20 (PUB20) (Arabidopsis thaliana (Mouse-ear cress)).